The chain runs to 120 residues: Immunoglobulin kappa variable 2D-28 (120 aa).

The signal sequence occupies residues 1 to 19; the sequence is MRLPAQLLGLLMLWVSGSS. In terms of domain architecture, Ig-like spans 20–120; it reads GDIVMTQSPL…YYCMQALQTP (101 aa). A framework-1 region spans residues 21–43; sequence DIVMTQSPLSLPVTPGEPASISC. A disulfide bridge connects residues Cys43 and Cys113. Residues 44–59 are complementarity-determining-1; the sequence is RSSQSLLHSNGYNYLD. The segment at 60-74 is framework-2; that stretch reads WYLQKPGQSPQLLIY. The tract at residues 75 to 81 is complementarity-determining-2; it reads LGSNRAS. A framework-3 region spans residues 82 to 113; the sequence is GVPDRFSGSGSGTDFTLKISRVEAEDVGVYYC. The complementarity-determining-3 stretch occupies residues 114 to 120; sequence MQALQTP.

As to quaternary structure, immunoglobulins are composed of two identical heavy chains and two identical light chains; disulfide-linked.

The protein localises to the secreted. It localises to the cell membrane. V region of the variable domain of immunoglobulin light chains that participates in the antigen recognition. Immunoglobulins, also known as antibodies, are membrane-bound or secreted glycoproteins produced by B lymphocytes. In the recognition phase of humoral immunity, the membrane-bound immunoglobulins serve as receptors which, upon binding of a specific antigen, trigger the clonal expansion and differentiation of B lymphocytes into immunoglobulins-secreting plasma cells. Secreted immunoglobulins mediate the effector phase of humoral immunity, which results in the elimination of bound antigens. The antigen binding site is formed by the variable domain of one heavy chain, together with that of its associated light chain. Thus, each immunoglobulin has two antigen binding sites with remarkable affinity for a particular antigen. The variable domains are assembled by a process called V-(D)-J rearrangement and can then be subjected to somatic hypermutations which, after exposure to antigen and selection, allow affinity maturation for a particular antigen. In Homo sapiens (Human), this protein is Immunoglobulin kappa variable 2D-28.